The following is a 942-amino-acid chain: UvrABC system protein A (942 aa).

32–39 (GLSGSGKS) is a binding site for ATP. The C4-type zinc-finger motif lies at 251–278 (CPVCGFTVPELEPRLFSFNAPFGSCPTC). ABC transporter domains follow at residues 308–589 (WNPI…KKSI) and 609–937 (GNGR…HYLK). Position 641–648 (641–648 (GVSGSGKS)) interacts with ATP. The C4-type zinc finger occupies 740–766 (CEACSGDGIIKIEMHFLPDVYVPCEVC).

Belongs to the ABC transporter superfamily. UvrA family. Forms a heterotetramer with UvrB during the search for lesions.

It localises to the cytoplasm. Its function is as follows. The UvrABC repair system catalyzes the recognition and processing of DNA lesions. UvrA is an ATPase and a DNA-binding protein. A damage recognition complex composed of 2 UvrA and 2 UvrB subunits scans DNA for abnormalities. When the presence of a lesion has been verified by UvrB, the UvrA molecules dissociate. The chain is UvrABC system protein A from Streptococcus pyogenes serotype M1.